We begin with the raw amino-acid sequence, 177 residues long: tRNA (cytidine(56)-2'-O)-methyltransferase (177 aa).

Residues L84 and 109-113 (GAEKV) contribute to the S-adenosyl-L-methionine site.

It belongs to the aTrm56 family. In terms of assembly, homodimer.

The protein localises to the cytoplasm. The enzyme catalyses cytidine(56) in tRNA + S-adenosyl-L-methionine = 2'-O-methylcytidine(56) in tRNA + S-adenosyl-L-homocysteine + H(+). Specifically catalyzes the AdoMet-dependent 2'-O-ribose methylation of cytidine at position 56 in tRNAs. In Methanosarcina mazei (strain ATCC BAA-159 / DSM 3647 / Goe1 / Go1 / JCM 11833 / OCM 88) (Methanosarcina frisia), this protein is tRNA (cytidine(56)-2'-O)-methyltransferase.